A 225-amino-acid chain; its full sequence is Cytochrome c oxidase subunit 2 (225 aa).

The Mitochondrial intermembrane portion of the chain corresponds to 1–25 (MSTWMMFMFQESNSLYADNLVSFHN). The chain crosses the membrane as a helical span at residues 26 to 47 (MVMIIVIMISTLTVYIIFDLFL). Topologically, residues 48 to 62 (NKFSNLYLLKNHNIE) are mitochondrial matrix. The chain crosses the membrane as a helical span at residues 63–82 (IIWMIVPIVILLIICFPSLK). The Mitochondrial intermembrane portion of the chain corresponds to 83–225 (ILYLIDEIVN…YFMNWIYKMN (143 aa)). Residues H159, C194, E196, C198, H202, and M205 each coordinate Cu cation. Residue E196 participates in Mg(2+) binding.

It belongs to the cytochrome c oxidase subunit 2 family. Component of the cytochrome c oxidase (complex IV, CIV), a multisubunit enzyme composed of a catalytic core of 3 subunits and several supernumerary subunits. The complex exists as a monomer or a dimer and forms supercomplexes (SCs) in the inner mitochondrial membrane with ubiquinol-cytochrome c oxidoreductase (cytochrome b-c1 complex, complex III, CIII). It depends on Cu cation as a cofactor.

It is found in the mitochondrion inner membrane. It carries out the reaction 4 Fe(II)-[cytochrome c] + O2 + 8 H(+)(in) = 4 Fe(III)-[cytochrome c] + 2 H2O + 4 H(+)(out). Component of the cytochrome c oxidase, the last enzyme in the mitochondrial electron transport chain which drives oxidative phosphorylation. The respiratory chain contains 3 multisubunit complexes succinate dehydrogenase (complex II, CII), ubiquinol-cytochrome c oxidoreductase (cytochrome b-c1 complex, complex III, CIII) and cytochrome c oxidase (complex IV, CIV), that cooperate to transfer electrons derived from NADH and succinate to molecular oxygen, creating an electrochemical gradient over the inner membrane that drives transmembrane transport and the ATP synthase. Cytochrome c oxidase is the component of the respiratory chain that catalyzes the reduction of oxygen to water. Electrons originating from reduced cytochrome c in the intermembrane space (IMS) are transferred via the dinuclear copper A center (CU(A)) of subunit 2 and heme A of subunit 1 to the active site in subunit 1, a binuclear center (BNC) formed by heme A3 and copper B (CU(B)). The BNC reduces molecular oxygen to 2 water molecules using 4 electrons from cytochrome c in the IMS and 4 protons from the mitochondrial matrix. The chain is Cytochrome c oxidase subunit 2 (COII) from Apis florea (Dwarf honeybee).